The following is a 614-amino-acid chain: Subtilin transport ATP-binding protein SpaT (614 aa).

5 consecutive transmembrane segments (helical) span residues 34–54 (FLKL…SLYI), 69–89 (VSIV…SELI), 147–167 (IIQA…SIAF), 175–195 (VSLL…KIGQ), and 267–287 (IAVQ…AFAG). The 287-residue stretch at 34 to 320 (FLKLIRFSII…IMTSIYSIYN (287 aa)) folds into the ABC transmembrane type-1 domain. In terms of domain architecture, ABC transporter spans 353 to 593 (VVFQNVSFIY…CPLYKKMDES (241 aa)). An ATP-binding site is contributed by 387-394 (GPNGSGKK).

Belongs to the ABC transporter superfamily.

The protein localises to the cell membrane. Functionally, probably implicated in the export process of the lantibiotic subtilin. The chain is Subtilin transport ATP-binding protein SpaT (spaT) from Bacillus subtilis.